The primary structure comprises 87 residues: Putative regulatory protein syc0519_c (87 aa).

This sequence belongs to the RemA family.

This is Putative regulatory protein syc0519_c from Synechococcus sp. (strain ATCC 27144 / PCC 6301 / SAUG 1402/1) (Anacystis nidulans).